Consider the following 135-residue polypeptide: UPF0355 protein SAV0387 (135 aa).

It belongs to the UPF0355 family.

This chain is UPF0355 protein SAV0387, found in Staphylococcus aureus (strain Mu50 / ATCC 700699).